The primary structure comprises 218 residues: Alkylmercury lyase (218 aa).

Belongs to the MerB family.

The enzyme catalyses an alkylmercury + H(+) = an alkane + Hg(2+). Its function is as follows. Cleaves the carbon-mercury bond of organomercurials such as phenylmercuric acetate. One product is Hg(2+), which is subsequently detoxified by the mercuric reductase. The polypeptide is Alkylmercury lyase (merB1) (Bacillus cereus).